Here is a 142-residue protein sequence, read N- to C-terminus: Hemoglobin subunit alpha-C (142 aa).

Residue alanine 2 is modified to N-acetylalanine. A Globin domain is found at 2 to 142 (ALNCDDKAHI…VSGLLTSKYR (141 aa)). Residue histidine 59 coordinates O2. Histidine 88 is a heme b binding site.

This sequence belongs to the globin family. In terms of assembly, heterotetramer of either two alpha-B chains or two alpha-C chains and two beta chains. The two major hemoglobins, B and C, associate upon deoxygenation to form a trimer of tetramers, BC2, that has a much lower affinity for oxygen than either component alone. Red blood cells.

In terms of biological role, the alpha-C chain is a component of adult hemoglobin C. The chain is Hemoglobin subunit alpha-C from Aquarana catesbeiana (American bullfrog).